The primary structure comprises 176 residues: Small capsomere-interacting protein (176 aa).

Disordered regions lie at residues 75–109 and 148–176; these read DKRQ…ASAG and ASAA…RKKQ. Positions 80–109 are enriched in low complexity; sequence ASVAGAGAHAHLGGSSATPVQQAQAAASAG.

This sequence belongs to the herpesviridae small capsomere-interacting protein family. As to quaternary structure, interacts with the major capsid protein/MCP.

The protein resides in the virion. It localises to the host nucleus. In terms of biological role, participates in the assembly of the infectious particles by decorating the outer surface of the capsid shell and thus forming a layer between the capsid and the tegument. Complexes composed of the major capsid protein and small capsomere-interacting protein/SCP assemble together in the host cytoplasm and are translocated to the nucleus, where they accumulate and participate in capsid assembly. The chain is Small capsomere-interacting protein from Epstein-Barr virus (strain B95-8) (HHV-4).